We begin with the raw amino-acid sequence, 117 residues long: Iron-sulfur cluster insertion protein ErpA (117 aa).

3 residues coordinate iron-sulfur cluster: cysteine 45, cysteine 109, and cysteine 111.

The protein belongs to the HesB/IscA family. In terms of assembly, homodimer. Requires iron-sulfur cluster as cofactor.

Its function is as follows. Required for insertion of 4Fe-4S clusters for at least IspG. The polypeptide is Iron-sulfur cluster insertion protein ErpA (Chromohalobacter salexigens (strain ATCC BAA-138 / DSM 3043 / CIP 106854 / NCIMB 13768 / 1H11)).